Reading from the N-terminus, the 428-residue chain is Glutamate-1-semialdehyde 2,1-aminomutase (428 aa).

Lys267 is modified (N6-(pyridoxal phosphate)lysine).

The protein belongs to the class-III pyridoxal-phosphate-dependent aminotransferase family. HemL subfamily. Homodimer. It depends on pyridoxal 5'-phosphate as a cofactor.

It is found in the cytoplasm. The enzyme catalyses (S)-4-amino-5-oxopentanoate = 5-aminolevulinate. It participates in porphyrin-containing compound metabolism; protoporphyrin-IX biosynthesis; 5-aminolevulinate from L-glutamyl-tRNA(Glu): step 2/2. This is Glutamate-1-semialdehyde 2,1-aminomutase from Pelobacter propionicus (strain DSM 2379 / NBRC 103807 / OttBd1).